The sequence spans 184 residues: MAAAFVLRNLYRARPALRSPPSELPWAPRRGHRLTPADDELYQRTRISLLQRESPLAMYIDSYSSRGFVVNGNRVFGPCALLPQSVVQWNVGSYQDITEESFSLFWMLEPRIEIVVVGTGDRTERLQPHVLRAMRQRGIAVEVQDTPNACATFNFLCHEGRVTGAALIPPPGGTALTSQAQAAE.

This sequence belongs to the NDUFAF3 family. As to quaternary structure, interacts with NDUFAF4, NDUFS2 and NDUFS3.

The protein resides in the nucleus. Its subcellular location is the mitochondrion inner membrane. Functionally, essential factor for the assembly of mitochondrial NADH:ubiquinone oxidoreductase complex (complex I). This chain is NADH dehydrogenase [ubiquinone] 1 alpha subcomplex assembly factor 3 (NDUFAF3), found in Bos taurus (Bovine).